A 369-amino-acid polypeptide reads, in one-letter code: DNA replication and repair protein RecF (369 aa).

30-37 contributes to the ATP binding site; the sequence is GINAQGKT.

This sequence belongs to the RecF family.

It localises to the cytoplasm. The RecF protein is involved in DNA metabolism; it is required for DNA replication and normal SOS inducibility. RecF binds preferentially to single-stranded, linear DNA. It also seems to bind ATP. The chain is DNA replication and repair protein RecF from Macrococcus caseolyticus (strain JCSC5402) (Macrococcoides caseolyticum).